The following is a 550-amino-acid chain: MSIELNWETLTTGPDGEELAHRIRDFIHSKFQTVPLPRFIKSVTVHDFQFGAIPPELELKDITDPLPDFYEEDPDVDYDDEDEDVEETHDYEERRSEAAASPARSGDDGLFGGQRGDGMNKLDRVASSSSSSVGRGSAPRPGAPPQTPTKSNININTRMRGEVPPQDLTSPFLGVSTPGILSGGTSNFSYFHSHLASSGLSGTQTPLAAVAGAQLGGPPQWNGLRSTGRGSGRRRSLAAASQGLDGEGFTPSHSRTSSTVSNADLQTASLGGFGGHLTPTSFLRSGQQTLREKHSVSTLAPTSVGTSRPPTRDLTTTMSTAQEDGQGGDGNCESSSAAAAGNEQNESDSSDRTKYRERRIEDMQAVFRIKYAGDVKLLLTADILLDYPMPSFVGIPVRLSITGLTFDGVGVVAHIRKRVHFCFLSPEDALAAVGSASGKEAGDGDEYGDTSGGAAAAAASSSASAATTPQGVATLASPAGAAPGSDEKAGGNTRMGGLLQEIRVESEIGQREGGKQSLKNVGKVEKFILEQVRRIFEEEFVYPSFWTFLV.

Residues 1-550 (MSIELNWETL…VYPSFWTFLV (550 aa)) enclose the SMP-LTD domain. Disordered regions lie at residues 62–168 (ITDP…PQDL), 218–356 (PPQW…TKYR), and 474–493 (TLAS…GGNT). Positions 69–90 (FYEEDPDVDYDDEDEDVEETHD) are enriched in acidic residues. Residues 125–140 (VASSSSSSVGRGSAPR) are compositionally biased toward low complexity. 4 stretches are compositionally biased toward polar residues: residues 148–157 (PTKSNININT), 251–269 (PSHS…QTAS), 278–289 (TPTSFLRSGQQT), and 296–323 (VSTL…TAQE).

The protein belongs to the MDM12 family. Component of the ER-mitochondria encounter structure (ERMES) or MDM complex, composed of MMM1, MDM10, MDM12 and MDM34. An MMM1 homodimer associates with one molecule of MDM12 on each side in a pairwise head-to-tail manner, and the SMP-LTD domains of MMM1 and MDM12 generate a continuous hydrophobic tunnel for phospholipid trafficking.

The protein resides in the mitochondrion outer membrane. Its subcellular location is the endoplasmic reticulum membrane. Component of the ERMES/MDM complex, which serves as a molecular tether to connect the endoplasmic reticulum (ER) and mitochondria. Components of this complex are involved in the control of mitochondrial shape and protein biogenesis, and function in nonvesicular lipid trafficking between the ER and mitochondria. MDM12 is required for the interaction of the ER-resident membrane protein MMM1 and the outer mitochondrial membrane-resident beta-barrel protein MDM10. The MDM12-MMM1 subcomplex functions in the major beta-barrel assembly pathway that is responsible for biogenesis of all mitochondrial outer membrane beta-barrel proteins, and acts in a late step after the SAM complex. The MDM10-MDM12-MMM1 subcomplex further acts in the TOM40-specific pathway after the action of the MDM12-MMM1 complex. Essential for establishing and maintaining the structure of mitochondria and maintenance of mtDNA nucleoids. The protein is Mitochondrial distribution and morphology protein 12 of Pyricularia oryzae (strain 70-15 / ATCC MYA-4617 / FGSC 8958) (Rice blast fungus).